A 611-amino-acid polypeptide reads, in one-letter code: Dehydrogenase pkfF (611 aa).

Positions 1 to 19 (MRHTALLPLVSSFIVPALA) are cleaved as a signal peptide. N-linked (GlcNAc...) asparagine glycosylation is found at asparagine 28 and asparagine 38. Residues 50–51 (TS), 71–72 (EA), and 137–140 (HYMV) each bind FAD. 6 N-linked (GlcNAc...) asparagine glycosylation sites follow: asparagine 180, asparagine 187, asparagine 240, asparagine 272, asparagine 409, and asparagine 471. Histidine 547 (proton acceptor) is an active-site residue. FAD contacts are provided by residues alanine 581 and 592–593 (PQ).

This sequence belongs to the GMC oxidoreductase family. FAD is required as a cofactor.

It participates in secondary metabolite biosynthesis. Its function is as follows. Dehydrogenase; part of the gene cluster that mediates the biosynthesis of aspernidine A, a prenylated isoindolinone. The starting point of the biosynthesis of aspernidin A is the production of orsellinaldehyde by the non-reducing polyketide synthase pkfA. Hydroxylation, methylation of one of the phenol groups, and prenylation, presumably catalyzed by the prenyltransferase pkfE, would be needed to yield aspernidine D. Subsequently, the cytochrome P450 monooxygenase pkfB is responsible for hydroxylation of aspernidine D to yield aspernidine E. The dehydrogenase pkfF may be responsible for further oxidation of aspernidine E to form a dialdehyde intermediate which is further transformed in a series of steps, some of which are enzyme-mediated, to generate aspernidine A. The possibility that additional enzymes outside of the cluster are involved in aspernidine A biosynthesis cannot be excluded. This Emericella nidulans (strain FGSC A4 / ATCC 38163 / CBS 112.46 / NRRL 194 / M139) (Aspergillus nidulans) protein is Dehydrogenase pkfF.